The sequence spans 492 residues: Lysine--tRNA ligase (492 aa).

D395 and E402 together coordinate Mg(2+).

The protein belongs to the class-II aminoacyl-tRNA synthetase family. Homodimer. Mg(2+) serves as cofactor.

It is found in the cytoplasm. It carries out the reaction tRNA(Lys) + L-lysine + ATP = L-lysyl-tRNA(Lys) + AMP + diphosphate. The polypeptide is Lysine--tRNA ligase (Thermus thermophilus (strain ATCC BAA-163 / DSM 7039 / HB27)).